A 147-amino-acid chain; its full sequence is Bis(5'-nucleosyl)-tetraphosphatase [asymmetrical] (147 aa).

An N-acetylalanine modification is found at A2. One can recognise a Nudix hydrolase domain in the interval A2–H139. A Nudix box motif is present at residues G43–G64.

Belongs to the Nudix hydrolase family. Requires a divalent metal cation as cofactor.

The catalysed reaction is P(1),P(4)-bis(5'-guanosyl) tetraphosphate + H2O = GMP + GTP + 2 H(+). It carries out the reaction a 5'-end CoA-ribonucleoside in mRNA + H2O = a 5'-end phospho-adenosine-phospho-ribonucleoside in mRNA + (R)-4'-phosphopantetheine + 2 H(+). It catalyses the reaction a 5'-end FAD-phospho-ribonucleoside in mRNA + H2O = a 5'-end phospho-adenosine-phospho-ribonucleoside in mRNA + FMN + 2 H(+). Inhibited by fluoride ions. Catalyzes the asymmetric hydrolysis of diadenosine 5',5'''-P1,P4-tetraphosphate (Ap4A) to yield AMP and ATP. Exhibits decapping activity towards FAD-capped RNAs and dpCoA-capped RNAs in vitro. The chain is Bis(5'-nucleosyl)-tetraphosphatase [asymmetrical] (NUDT2) from Sus scrofa (Pig).